Here is a 279-residue protein sequence, read N- to C-terminus: 3-methyl-2-oxobutanoate hydroxymethyltransferase (279 aa).

Residues Asp-44 and Asp-83 each contribute to the Mg(2+) site. Residues 44 to 45 (DS), Asp-83, and Lys-112 each bind 3-methyl-2-oxobutanoate. Glu-114 contacts Mg(2+). Glu-180 serves as the catalytic Proton acceptor.

Belongs to the PanB family. Homodecamer; pentamer of dimers. It depends on Mg(2+) as a cofactor.

It is found in the cytoplasm. It catalyses the reaction 3-methyl-2-oxobutanoate + (6R)-5,10-methylene-5,6,7,8-tetrahydrofolate + H2O = 2-dehydropantoate + (6S)-5,6,7,8-tetrahydrofolate. The protein operates within cofactor biosynthesis; (R)-pantothenate biosynthesis; (R)-pantoate from 3-methyl-2-oxobutanoate: step 1/2. In terms of biological role, catalyzes the reversible reaction in which hydroxymethyl group from 5,10-methylenetetrahydrofolate is transferred onto alpha-ketoisovalerate to form ketopantoate. In Chloroflexus aggregans (strain MD-66 / DSM 9485), this protein is 3-methyl-2-oxobutanoate hydroxymethyltransferase.